Here is a 141-residue protein sequence, read N- to C-terminus: Heavy metal-associated isoprenylated plant protein 29 (141 aa).

Positions 1 to 59 (MEVPMDCPGCENKVRKALEKMNGVHDVQIDIKQQRVTVTGSAEQKKVLKVARNVTKRDI) constitute an HMA domain. Positions 7 and 10 each coordinate a metal cation. Cysteine methyl ester is present on Cys138. Cys138 carries the S-farnesyl cysteine lipid modification. A propeptide spans 139 to 141 (SIM) (removed in mature form).

This sequence belongs to the HIPP family.

In terms of biological role, heavy-metal-binding protein. In Arabidopsis thaliana (Mouse-ear cress), this protein is Heavy metal-associated isoprenylated plant protein 29.